The sequence spans 199 residues: Adenylate kinase (199 aa).

10–15 (GAGKGT) is a binding site for ATP. An NMP region spans residues 30–59 (STGDMLRAAVAARTPVGLQAKSIMESGGLV). AMP-binding positions include T31, R36, 57 to 59 (GLV), 85 to 88 (GFPR), and Q92. The segment at 126-142 (KRAAETLARGEAVRKDD) is LID. R127 is a binding site for ATP. The AMP site is built by R139 and R150. A178 provides a ligand contact to ATP.

It belongs to the adenylate kinase family. In terms of assembly, monomer.

It is found in the cytoplasm. It carries out the reaction AMP + ATP = 2 ADP. Its pathway is purine metabolism; AMP biosynthesis via salvage pathway; AMP from ADP: step 1/1. Catalyzes the reversible transfer of the terminal phosphate group between ATP and AMP. Plays an important role in cellular energy homeostasis and in adenine nucleotide metabolism. The chain is Adenylate kinase from Methylobacterium nodulans (strain LMG 21967 / CNCM I-2342 / ORS 2060).